The chain runs to 459 residues: MKKLWGGRFTKTAEEWVDEFGASIPFDQELVEEDIEGSLAHVTMLGECGILPAEDVEKIKDGLLRLLEKAKRGELEFSVAYEDIHLNIEKMLIDDIGSVGGKLHTGRSRNDQVATDMHLYLRKRVKEILSLIRGLQRALVSQAEKHVETIMPGYTHLQRAQPISFAHHLLAYVWMLERDYERFSESLKRINRSPLGAGALAGTTFPINRQRTAELLGFEGIYENSLDAVSDRDFIIEFLSNSSMLMMHLSRLAEELILWSSQEFQFVELDDAFATGSSIMPQKKNPDMAELIRGKTGRVYGHLMALLTVMKGLPLAYNKDMQEDKEGMFDTVKTVIGSLKIFTGMIETMNVRVDAMEKATKQDFSNATELADYLAAKGMPFREAHEVVGKLVLHCIEQGVFLADLPLEVYKEASPLFEKDIYDALNPRTAVNRRNSAGGTGFAEVRATLAKVKERLGTL.

This sequence belongs to the lyase 1 family. Argininosuccinate lyase subfamily.

Its subcellular location is the cytoplasm. It catalyses the reaction 2-(N(omega)-L-arginino)succinate = fumarate + L-arginine. It functions in the pathway amino-acid biosynthesis; L-arginine biosynthesis; L-arginine from L-ornithine and carbamoyl phosphate: step 3/3. In Geobacillus thermodenitrificans (strain NG80-2), this protein is Argininosuccinate lyase.